Consider the following 255-residue polypeptide: Hydroxyacylglutathione hydrolase (255 aa).

Zn(2+) contacts are provided by His52, His54, Asp56, His57, His108, Asp130, and His168.

The protein belongs to the metallo-beta-lactamase superfamily. Glyoxalase II family. As to quaternary structure, monomer. The cofactor is Zn(2+).

It catalyses the reaction an S-(2-hydroxyacyl)glutathione + H2O = a 2-hydroxy carboxylate + glutathione + H(+). Its pathway is secondary metabolite metabolism; methylglyoxal degradation; (R)-lactate from methylglyoxal: step 2/2. Functionally, thiolesterase that catalyzes the hydrolysis of S-D-lactoyl-glutathione to form glutathione and D-lactic acid. This is Hydroxyacylglutathione hydrolase from Albidiferax ferrireducens (strain ATCC BAA-621 / DSM 15236 / T118) (Rhodoferax ferrireducens).